The sequence spans 65 residues: Large ribosomal subunit protein bL35 (65 aa).

A disordered region spans residues 1–26 (MPKIKTVRGAAKRFKKTASGGFKRKQ). Residues 10–26 (AAKRFKKTASGGFKRKQ) show a composition bias toward basic residues.

The protein belongs to the bacterial ribosomal protein bL35 family.

The chain is Large ribosomal subunit protein bL35 from Mannheimia succiniciproducens (strain KCTC 0769BP / MBEL55E).